Consider the following 555-residue polypeptide: MNGNGTADKPGPPGGKPFGPGMGPPIQYPTGFKLYSIMTGLYLASFLTALDRTVLVVAIPQITDHFNSIDDIGWYGSAYLLTFCAFQLLFGKIYSFYNPKWVFLSAVLIFEIGSAICGAAPNSTALIIGRAIAGLGSSGIFGGSVIITFFTVPLHQRPIYTGIAGVIFALASSVGPLIGGGFTNNVSWRWCFYINLPVGALTVVTILLFLNLPPARKAGTPLREQLLQMDPLGNLCLIPGIICLLLAIQWGGSTYAWSNGRIVALLVLAGVLLIAFVGVQLWLQDKGTIPPRVMKQRSIAAGMAFTICVTAGFMSFNYYLPIWFQAIKNASSFHSGVMMLPTVISSGVASLACGFIIHRVGYYTPFMIGGSVLMAIGAGLLTTFTPTTEHPKWIGYQVLWALGCGMSMQQASLAAQTVLPKPDAPIGISLIFFSQSLGGSVFLAVDDSIYSNRLAAKLGSIPNLPQSALTNTGATNIRNLVAPQYLGRLLGGYNDALMDVFRVAVASSCACVVAAAFMEWKNVRAAKAAGPGGPGGPGGPGGPGGPEGLRGGNKV.

Positions 1-20 (MNGNGTADKPGPPGGKPFGP) are disordered. N4 carries N-linked (GlcNAc...) asparagine glycosylation. A run of 3 helical transmembrane segments spans residues 30–50 (TGFKLYSIMTGLYLASFLTAL), 71–91 (DIGWYGSAYLLTFCAFQLLFG), and 101–121 (WVFLSAVLIFEIGSAICGAAP). N-linked (GlcNAc...) asparagine glycosylation occurs at N122. Transmembrane regions (helical) follow at residues 132–152 (IAGLGSSGIFGGSVIITFFTV) and 162–182 (GIAGVIFALASSVGPLIGGGF). N-linked (GlcNAc...) asparagine glycosylation is present at N185. 4 helical membrane passes run 190–210 (WCFYINLPVGALTVVTILLFL), 232–252 (LGNLCLIPGIICLLLAIQWGG), 262–282 (IVALLVLAGVLLIAFVGVQLW), and 304–324 (AFTICVTAGFMSFNYYLPIWF). An N-linked (GlcNAc...) asparagine glycan is attached at N329. Helical transmembrane passes span 337–357 (VMMLPTVISSGVASLACGFII), 364–384 (TPFMIGGSVLMAIGAGLLTTF), 393–413 (WIGYQVLWALGCGMSMQQASL), 425–445 (PIGISLIFFSQSLGGSVFLAV), and 497–517 (LMDVFRVAVASSCACVVAAAF). Residues 528-555 (AAGPGGPGGPGGPGGPGGPEGLRGGNKV) are disordered. Residues 530–555 (GPGGPGGPGGPGGPGGPEGLRGGNKV) are compositionally biased toward gly residues.

This sequence belongs to the major facilitator superfamily. TCR/Tet family.

It is found in the endoplasmic reticulum membrane. Functionally, MFS-type transporter; part of the gene cluster that mediates the biosynthesis of viriditoxin, one of the 'classical' secondary metabolites produced by fungi and that has antibacterial activity. Is not essential for viriditoxin production. This is MFS-type transporter VdtG from Byssochlamys spectabilis (Paecilomyces variotii).